The primary structure comprises 335 residues: Oligopeptide transport ATP-binding protein OppD (335 aa).

The region spanning 18-267 (LEVNDLRVTF…PVHPYSIGLL (250 aa)) is the ABC transporter domain. Residue 54–61 (GESGSGKS) coordinates ATP.

It belongs to the ABC transporter superfamily. In terms of assembly, the complex is composed of two ATP-binding proteins (OppD and OppF), two transmembrane proteins (OppB and OppC) and a solute-binding protein (OppA).

The protein resides in the cell inner membrane. The catalysed reaction is a [peptide](out) + ATP + H2O = a [peptide](in) + ADP + phosphate + H(+). The enzyme catalyses L-alanyl-gamma-D-glutamyl-meso-2,6-diaminopimelate(out) + ATP + H2O = L-alanyl-gamma-D-glutamyl-meso-2,6-diaminopimelate(in) + ADP + phosphate + H(+). Part of the ABC transporter complex OppABCDF involved in the uptake of oligopeptides, including the cell wall murein tripeptide L-alanyl-gamma-D-glutamyl-meso-diaminopimelate. Responsible for energy coupling to the transport system. Plays an important nutritional role and is involved in the recycling of cell wall peptides. Binds ATP. In Salmonella typhimurium (strain LT2 / SGSC1412 / ATCC 700720), this protein is Oligopeptide transport ATP-binding protein OppD.